The chain runs to 169 residues: Peptide deformylase (169 aa).

Fe cation is bound by residues Cys91 and His133. The active site involves Glu134. His137 serves as a coordination point for Fe cation.

Belongs to the polypeptide deformylase family. It depends on Fe(2+) as a cofactor.

The catalysed reaction is N-terminal N-formyl-L-methionyl-[peptide] + H2O = N-terminal L-methionyl-[peptide] + formate. In terms of biological role, removes the formyl group from the N-terminal Met of newly synthesized proteins. Requires at least a dipeptide for an efficient rate of reaction. N-terminal L-methionine is a prerequisite for activity but the enzyme has broad specificity at other positions. This chain is Peptide deformylase, found in Escherichia coli (strain SMS-3-5 / SECEC).